A 332-amino-acid polypeptide reads, in one-letter code: Lipoyl synthase (332 aa).

[4Fe-4S] cluster is bound by residues C74, C79, C85, C100, C104, C107, and S314. The region spanning 85 to 303 is the Radical SAM core domain; the sequence is CFGKGTATFM…EEKAYEMGFS (219 aa).

The protein belongs to the radical SAM superfamily. Lipoyl synthase family. The cofactor is [4Fe-4S] cluster.

It is found in the cytoplasm. The enzyme catalyses [[Fe-S] cluster scaffold protein carrying a second [4Fe-4S](2+) cluster] + N(6)-octanoyl-L-lysyl-[protein] + 2 oxidized [2Fe-2S]-[ferredoxin] + 2 S-adenosyl-L-methionine + 4 H(+) = [[Fe-S] cluster scaffold protein] + N(6)-[(R)-dihydrolipoyl]-L-lysyl-[protein] + 4 Fe(3+) + 2 hydrogen sulfide + 2 5'-deoxyadenosine + 2 L-methionine + 2 reduced [2Fe-2S]-[ferredoxin]. The protein operates within protein modification; protein lipoylation via endogenous pathway; protein N(6)-(lipoyl)lysine from octanoyl-[acyl-carrier-protein]: step 2/2. In terms of biological role, catalyzes the radical-mediated insertion of two sulfur atoms into the C-6 and C-8 positions of the octanoyl moiety bound to the lipoyl domains of lipoate-dependent enzymes, thereby converting the octanoylated domains into lipoylated derivatives. The chain is Lipoyl synthase from Polaromonas naphthalenivorans (strain CJ2).